We begin with the raw amino-acid sequence, 447 residues long: Chromosomal replication initiator protein DnaA (447 aa).

The segment at 1–74 is domain I, interacts with DnaA modulators; sequence MENIEELWSA…MLLEVTGSEL (74 aa). The domain II stretch occupies residues 74–108; it reads LNTKFIIPDSLEEIEEQKPMPKPKQSTDTGDSPKS. The segment at 85 to 107 is disordered; sequence EEIEEQKPMPKPKQSTDTGDSPK. Over residues 97–107 the composition is skewed to polar residues; it reads KQSTDTGDSPK. A domain III, AAA+ region region spans residues 109–325; sequence MLNSKYTFDT…GALIRVVAYS (217 aa). ATP contacts are provided by Gly-153, Gly-155, Lys-156, and Thr-157. The segment at 326–447 is domain IV, binds dsDNA; the sequence is SLVNQDIDAS…EELKEKLKSI (122 aa).

The protein belongs to the DnaA family. In terms of assembly, oligomerizes as a right-handed, spiral filament on DNA at oriC.

Its subcellular location is the cytoplasm. In terms of biological role, plays an essential role in the initiation and regulation of chromosomal replication. ATP-DnaA binds to the origin of replication (oriC) to initiate formation of the DNA replication initiation complex once per cell cycle. Binds the DnaA box (a 9 base pair repeat at the origin) and separates the double-stranded (ds)DNA. Forms a right-handed helical filament on oriC DNA; dsDNA binds to the exterior of the filament while single-stranded (ss)DNA is stabiized in the filament's interior. The ATP-DnaA-oriC complex binds and stabilizes one strand of the AT-rich DNA unwinding element (DUE), permitting loading of DNA polymerase. After initiation quickly degrades to an ADP-DnaA complex that is not apt for DNA replication. Binds acidic phospholipids. This chain is Chromosomal replication initiator protein DnaA, found in Oceanobacillus iheyensis (strain DSM 14371 / CIP 107618 / JCM 11309 / KCTC 3954 / HTE831).